Consider the following 703-residue polypeptide: Hyperosmolality-gated Ca2+ permeable channel 2.3 (703 aa).

The Extracellular segment spans residues 1–3 (MLL). A helical membrane pass occupies residues 4–26 (SALLTSVGINLGLCFLFFTLYSI). The Cytoplasmic segment spans residues 27–81 (LRKQPSNVTVYGPRLVKKDGKSQQSNEFNLERLLPTAGWVKRALEPTNDEILSNL). A helical transmembrane segment spans residues 82–115 (GLDALVFIRVFVFSIRVFSFASVVGIFILLPVNY). At 116–143 (MGTEFEEFFDLPKKSMDNFSISNVNDGS) the chain is on the extracellular side. A helical membrane pass occupies residues 144–165 (NKLWIHFCAIYIFTAVVCSLLY). Residues 166-355 (YEHKYILTKR…TASFVRRWIS (190 aa)) are Cytoplasmic-facing. Residues 228–300 (RTDKLKVLMN…LKQSLLAGEE (73 aa)) adopt a coiled-coil conformation. Residues 356-382 (NVVVLVAFVALLILYIVPVVLVQGLAN) traverse the membrane as a helical segment. Residues 383–410 (LHQLETWFPFLKGILNMKIVSQVITGYL) lie on the Extracellular side of the membrane. The helical transmembrane segment at 411-432 (PSLIFQLFLLIVPPIMLLLSSM) threads the bilayer. Residues 433–436 (QGFI) are Cytoplasmic-facing. A helical transmembrane segment spans residues 437–463 (SHSQIEKSACIKLLIFTVWNSFFANVL). Residues 464–489 (SGSALYRVNVFLEPKTIPRVLAAAVP) are Extracellular-facing. Residues 490–512 (AQASFFVSYVVTSGWTGLSSEIL) traverse the membrane as a helical segment. Topologically, residues 513-540 (RLVPLLWSFITKLFGKEDDKEFEVPSTP) are cytoplasmic. The helical transmembrane segment at 541-561 (FCQEIPRILFFGLLGITYFFL) threads the bilayer. Residue Ser-562 is a topological domain, extracellular. The helical transmembrane segment at 563-586 (PLILPFLLVYYCLGYIIYRNQLLN) threads the bilayer. Topologically, residues 587–598 (VYAAKYETGGKF) are cytoplasmic. Residues 599–623 (WPIVHSYTIFSLVLMHIIAVGLFGL) traverse the membrane as a helical segment. The Extracellular segment spans residues 624-626 (KEL). Residues 627–655 (PVASSLTIPLPVLTVLFSIYCQRRFLPNF) form a helical membrane-spanning segment. The Cytoplasmic portion of the chain corresponds to 656–703 (KSYPTQCLVNKDKADEREQNMSEFYSELVVAYRDPALSASQDSRDISP).

It belongs to the CSC1 (TC 1.A.17) family. As to quaternary structure, homodimer.

The protein resides in the membrane. Functionally, acts as an osmosensitive calcium-permeable cation channel. The sequence is that of Hyperosmolality-gated Ca2+ permeable channel 2.3 from Arabidopsis thaliana (Mouse-ear cress).